The primary structure comprises 66 residues: Xenoxin-2 (66 aa).

4 disulfides stabilise this stretch: cysteine 3-cysteine 24, cysteine 17-cysteine 37, cysteine 43-cysteine 58, and cysteine 59-cysteine 64.

Expressed by the skin dorsal glands.

It localises to the secreted. Lacks alpha-neurotoxic activity, has apparently no antibacterial activity, nor anti-coagulant potency. This chain is Xenoxin-2, found in Xenopus laevis (African clawed frog).